Here is a 195-residue protein sequence, read N- to C-terminus: Imidazoleglycerol-phosphate dehydratase (195 aa).

It belongs to the imidazoleglycerol-phosphate dehydratase family.

It is found in the cytoplasm. It carries out the reaction D-erythro-1-(imidazol-4-yl)glycerol 3-phosphate = 3-(imidazol-4-yl)-2-oxopropyl phosphate + H2O. It participates in amino-acid biosynthesis; L-histidine biosynthesis; L-histidine from 5-phospho-alpha-D-ribose 1-diphosphate: step 6/9. This chain is Imidazoleglycerol-phosphate dehydratase, found in Burkholderia lata (strain ATCC 17760 / DSM 23089 / LMG 22485 / NCIMB 9086 / R18194 / 383).